The chain runs to 247 residues: MINIIFLHGLLGTKNDWQKVIENLPHFNCIALDLPFHGQAKDLEVTNFEDSAEYLAQQIKSAVKNGPYFLVGYSLGGRIALYYALQAQLERSNLQGVILEGANLGLKTDEEKQARFQQDFAWAQRFMQESPEKVLNDWYQQPVFSHLTTEERLQLVEKRKSNCGKNIGKMLLATSLSKQPDFSEKVRLSSLPFFYFCGERDHKFQVLAKENQIDLVTIPCAGHNSHLENSKYFSKKIENCILKIVRP.

An AB hydrolase-1 domain is found at Ile4–Asn229.

This sequence belongs to the AB hydrolase superfamily. MenH family. In terms of assembly, monomer.

The enzyme catalyses 5-enolpyruvoyl-6-hydroxy-2-succinyl-cyclohex-3-ene-1-carboxylate = (1R,6R)-6-hydroxy-2-succinyl-cyclohexa-2,4-diene-1-carboxylate + pyruvate. The protein operates within quinol/quinone metabolism; 1,4-dihydroxy-2-naphthoate biosynthesis; 1,4-dihydroxy-2-naphthoate from chorismate: step 3/7. It participates in quinol/quinone metabolism; menaquinone biosynthesis. In terms of biological role, catalyzes a proton abstraction reaction that results in 2,5-elimination of pyruvate from 2-succinyl-5-enolpyruvyl-6-hydroxy-3-cyclohexene-1-carboxylate (SEPHCHC) and the formation of 2-succinyl-6-hydroxy-2,4-cyclohexadiene-1-carboxylate (SHCHC). The protein is Putative 2-succinyl-6-hydroxy-2,4-cyclohexadiene-1-carboxylate synthase of Haemophilus influenzae (strain ATCC 51907 / DSM 11121 / KW20 / Rd).